The following is a 367-amino-acid chain: MADWYRLAWPLICGLDPERAHHLAIRALALGLAGHDRAADDPVLACSLWGRRFANPLGLAAGFDKNGEVADALFDLGFGFVEVGTVTPRPQAGNPRPRLFRLTQDRAVINRMGFNNQGMEAMAARFVRARPRGVLGINLGKNKTTEDAAGDYEAGIAKLAPLADYLVINVSSPNTPGLRALQGREPLSLLIARARAALDAACPGLRPPLLLKVAPDLTDEDMADIAEVALGGGLDGLICTNTTIARPKSLVSDHAGETGGLSGLPLRYRARQVIARLYGLTKGALPLIGVGGIGDGAEAYARIRAGASLIQIYSALVYEGPGLVGRIKRDLAQRLRADGFASVAEAVGADHRDPKGASGKLAPRSPL.

FMN-binding positions include Ala-61–Lys-65 and Thr-85. Lys-65 is a binding site for substrate. Asn-110–Phe-114 is a substrate binding site. FMN contacts are provided by Asn-138 and Asn-169. Residue Asn-169 coordinates substrate. The active-site Nucleophile is the Ser-172. Asn-174 is a substrate binding site. FMN contacts are provided by Lys-212 and Thr-240. Residue Asn-241 to Thr-242 coordinates substrate. Residues Gly-263, Gly-292, and Tyr-313 to Ser-314 each bind FMN.

This sequence belongs to the dihydroorotate dehydrogenase family. Type 2 subfamily. As to quaternary structure, monomer. FMN serves as cofactor.

Its subcellular location is the cell membrane. It catalyses the reaction (S)-dihydroorotate + a quinone = orotate + a quinol. It functions in the pathway pyrimidine metabolism; UMP biosynthesis via de novo pathway; orotate from (S)-dihydroorotate (quinone route): step 1/1. Catalyzes the conversion of dihydroorotate to orotate with quinone as electron acceptor. The chain is Dihydroorotate dehydrogenase (quinone) from Rhodospirillum rubrum (strain ATCC 11170 / ATH 1.1.1 / DSM 467 / LMG 4362 / NCIMB 8255 / S1).